Reading from the N-terminus, the 175-residue chain is Vitamin K epoxide reductase complex subunit 1-like protein 1 (175 aa).

At 1 to 12 the chain is on the cytoplasmic side; it reads MAAPVLRVSTPR. The chain crosses the membrane as a helical span at residues 13 to 35; that stretch reads WERIARVLVCLLGILLSLYAFHV. Over 36 to 86 the chain is Lumenal; sequence EREHARDPSYKALCDVSSSISCSKVFGSRWGRGFGLLGSIFGNDSALNQPN. A disulfide bond links Cys49 and Cys57. A (S)-warfarin-binding site is contributed by Asn86. A helical membrane pass occupies residues 87-101; the sequence is SVYGIVFYAFQLLLG. Residues 102 to 106 are Cytoplasmic-facing; that stretch reads MTVSA. The chain crosses the membrane as a helical span at residues 107 to 134; the sequence is MAALILMTTSIMSVVGSLYLGYILYFVL. Over 135–137 the chain is Lumenal; sequence KDL. Cys138 and Cys141 are oxidised to a cystine. Residues 138–159 traverse the membrane as a helical segment; sequence CVICVTTYALNFILFVLNYKRL. Phylloquinone contacts are provided by Cys141 and Tyr145. Residue Tyr145 participates in (S)-warfarin binding. Topologically, residues 160–175 are cytoplasmic; sequence VYLNEAWKQKLQAKQD.

This sequence belongs to the VKOR family.

It localises to the endoplasmic reticulum membrane. It carries out the reaction phylloquinone + [protein]-disulfide + H2O = 2,3-epoxyphylloquinone + [protein]-dithiol. It catalyses the reaction phylloquinol + [protein]-disulfide = phylloquinone + [protein]-dithiol. Its activity is regulated as follows. Inhibited by warfarin (coumadin). Warfarin locks VKORC1 in both redox states into the closed conformation. Its function is as follows. Involved in vitamin K metabolism. Can reduce inactive vitamin K 2,3-epoxide to active vitamin K, and may contribute to vitamin K-mediated protection against oxidative stress. Plays a role in vitamin K-dependent gamma-carboxylation of Glu residues in target proteins. This is Vitamin K epoxide reductase complex subunit 1-like protein 1 (vkorc1l1) from Takifugu rubripes (Japanese pufferfish).